The sequence spans 234 residues: Ubiquitin thioesterase OTUB2 (234 aa).

One can recognise an OTU domain in the interval 40–231; the sequence is TAIRKTKGDG…TSHYNILYAA (192 aa). Asp48 is an active-site residue. Catalysis depends on Cys51, which acts as the Nucleophile. Residue His224 is part of the active site.

It belongs to the peptidase C65 family. In terms of tissue distribution, widely expressed. Expressed at higher level in brain.

The catalysed reaction is Thiol-dependent hydrolysis of ester, thioester, amide, peptide and isopeptide bonds formed by the C-terminal Gly of ubiquitin (a 76-residue protein attached to proteins as an intracellular targeting signal).. Functionally, hydrolase that can remove conjugated ubiquitin from proteins in vitro and may therefore play an important regulatory role at the level of protein turnover by preventing degradation. Mediates deubiquitination of 'Lys-11'-,'Lys-48'- and 'Lys-63'-linked polyubiquitin chains, with a preference for 'Lys-63'-linked polyubiquitin chains. In Homo sapiens (Human), this protein is Ubiquitin thioesterase OTUB2 (OTUB2).